Here is an 840-residue protein sequence, read N- to C-terminus: Probable alpha-glucuronidase A (840 aa).

Residues 1-19 (MRSVITTLTLVASVGLAVA) form the signal peptide. N-linked (GlcNAc...) asparagine glycans are attached at residues Asn222, Asn310, Asn465, Asn527, Asn576, Asn682, and Asn732.

The protein belongs to the glycosyl hydrolase 67 family.

The protein resides in the secreted. The enzyme catalyses an alpha-D-glucuronoside + H2O = D-glucuronate + an alcohol. Functionally, alpha-glucuronidase involved in the hydrolysis of xylan, a major structural heterogeneous polysaccharide found in plant biomass representing the second most abundant polysaccharide in the biosphere, after cellulose. Releases 4-O-methylglucuronic acid from xylan. The chain is Probable alpha-glucuronidase A (aguA) from Aspergillus clavatus (strain ATCC 1007 / CBS 513.65 / DSM 816 / NCTC 3887 / NRRL 1 / QM 1276 / 107).